The chain runs to 318 residues: MALDDIHTPVLLERCLELLAPALQGEGAVLVDATLGMAGHSEAFLDALPGLRLVGLDRDPDALAIAGERLARFGDRVHLVHTVYDGIGRALDGLGIGEVQGVFFDLGVSSLQLDRVERGFSYSQDAPLDMRMDGTAGLTAAQVVAEYDELELRRIFYDYGEEKLAPRYASRIVQAREVEPITTSARLVEIIQQATPAAVQRAGHPAKRVFQALRIEVNQELSVLARAMPAAIDRLAVGGRVVVESYQSLEDRIVKRELRVRSTSTAPVGLPVELPEHRPELKLLVRGAELADQHEIAQNPRAASVRLRAAERARRRHA.

Residues 38–40 (AGH), Asp-57, Leu-91, Asp-105, and Gln-112 each bind S-adenosyl-L-methionine.

This sequence belongs to the methyltransferase superfamily. RsmH family.

It is found in the cytoplasm. It carries out the reaction cytidine(1402) in 16S rRNA + S-adenosyl-L-methionine = N(4)-methylcytidine(1402) in 16S rRNA + S-adenosyl-L-homocysteine + H(+). Specifically methylates the N4 position of cytidine in position 1402 (C1402) of 16S rRNA. The sequence is that of Ribosomal RNA small subunit methyltransferase H from Clavibacter sepedonicus (Clavibacter michiganensis subsp. sepedonicus).